The sequence spans 504 residues: Maturase K (504 aa).

Belongs to the intron maturase 2 family. MatK subfamily.

The protein localises to the plastid. Its subcellular location is the chloroplast. Usually encoded in the trnK tRNA gene intron. Probably assists in splicing its own and other chloroplast group II introns. This is Maturase K from Pseudoturritis turrita (Tower rock-cress).